The following is a 224-amino-acid chain: Cytidylate kinase (224 aa).

Gly-11–Thr-19 provides a ligand contact to ATP.

This sequence belongs to the cytidylate kinase family. Type 1 subfamily.

It localises to the cytoplasm. It carries out the reaction CMP + ATP = CDP + ADP. The enzyme catalyses dCMP + ATP = dCDP + ADP. In Listeria innocua serovar 6a (strain ATCC BAA-680 / CLIP 11262), this protein is Cytidylate kinase.